The primary structure comprises 97 residues: UPF0213 protein BLi00048/BL00536 (97 aa).

In terms of domain architecture, GIY-YIG spans 4–79; it reads NSHYFYVLSC…KKLSRKNKER (76 aa).

It belongs to the UPF0213 family.

The protein is UPF0213 protein BLi00048/BL00536 of Bacillus licheniformis (strain ATCC 14580 / DSM 13 / JCM 2505 / CCUG 7422 / NBRC 12200 / NCIMB 9375 / NCTC 10341 / NRRL NRS-1264 / Gibson 46).